Here is a 468-residue protein sequence, read N- to C-terminus: Membrane-associated tyrosine- and threonine-specific cdc2-inhibitory kinase wee-1.1 (468 aa).

Over residues 25 to 42 (SKDEPNKLNTSRKLEVTT) the composition is skewed to basic and acidic residues. The interval 25–63 (SKDEPNKLNTSRKLEVTTKKNQSNNKKRPPPINKARKSL) is disordered. Positions 49-61 (NKKRPPPINKARK) are enriched in basic residues. One can recognise a Protein kinase domain in the interval 106-357 (FNFDKNLGKG…SELMKNHVVK (252 aa)). ATP-binding positions include 112–120 (LGKGSFGEV) and Lys-135. Asp-224 functions as the Proton acceptor in the catalytic mechanism. 2 residues coordinate Mg(2+): Asn-229 and Asp-242. The tract at residues 425–453 (EDEYEVFSPPRTPVKKSRYQQTMPEVSPP) is disordered.

The protein belongs to the protein kinase superfamily. Ser/Thr protein kinase family. WEE1 subfamily. As to expression, in the 12-13-cell embryo, expressed in the E blastomere. In the 16-cell embryo, expressed in the eight AB cells.

The protein localises to the nucleus. It carries out the reaction L-seryl-[protein] + ATP = O-phospho-L-seryl-[protein] + ADP + H(+). It catalyses the reaction L-threonyl-[protein] + ATP = O-phospho-L-threonyl-[protein] + ADP + H(+). Functionally, acts as a negative regulator of entry into mitosis (G2 to M transition) by phosphorylation of the CDK1 kinase. The sequence is that of Membrane-associated tyrosine- and threonine-specific cdc2-inhibitory kinase wee-1.1 (wee-1.1) from Caenorhabditis elegans.